The sequence spans 92 residues: YcgL domain-containing protein PBPRA1080 (92 aa).

A YcgL domain is found at 1 to 84 (MLCSIYKSSK…PVTNLLHQYK (84 aa)).

The polypeptide is YcgL domain-containing protein PBPRA1080 (Photobacterium profundum (strain SS9)).